Reading from the N-terminus, the 295-residue chain is Tyrosine recombinase XerC (295 aa).

One can recognise a Core-binding (CB) domain in the interval 1-84; that stretch reads MTLEEQFLSY…SLKSFYRLLT (84 aa). The Tyr recombinase domain occupies 105–289; the sequence is KLPEFFYQDE…SMQHLTAEYR (185 aa). Residues Arg-145, Lys-169, His-241, Arg-244, and His-267 contribute to the active site. Tyr-276 acts as the O-(3'-phospho-DNA)-tyrosine intermediate in catalysis.

It belongs to the 'phage' integrase family. XerC subfamily. As to quaternary structure, forms a cyclic heterotetrameric complex composed of two molecules of XerC and two molecules of XerD.

The protein resides in the cytoplasm. Site-specific tyrosine recombinase, which acts by catalyzing the cutting and rejoining of the recombining DNA molecules. The XerC-XerD complex is essential to convert dimers of the bacterial chromosome into monomers to permit their segregation at cell division. It also contributes to the segregational stability of plasmids. This is Tyrosine recombinase XerC from Lactobacillus leichmannii.